A 429-amino-acid chain; its full sequence is DNA primase DnaG (429 aa).

In terms of domain architecture, Toprim spans 172–246; that stretch reads DSIIVVEGRN…DVDFIARAPP (75 aa). Positions 178, 220, and 222 each coordinate Mg(2+). A disordered region spans residues 287–322; the sequence is RNTKELEERQGNELKNERPEKINENEESEKNVELKE.

It belongs to the archaeal DnaG primase family. Forms a ternary complex with MCM helicase and DNA. Component of the archaeal exosome complex. Requires Mg(2+) as cofactor.

The enzyme catalyses ssDNA + n NTP = ssDNA/pppN(pN)n-1 hybrid + (n-1) diphosphate.. In terms of biological role, RNA polymerase that catalyzes the synthesis of short RNA molecules used as primers for DNA polymerase during DNA replication. Also part of the exosome, which is a complex involved in RNA degradation. Acts as a poly(A)-binding protein that enhances the interaction between heteromeric, adenine-rich transcripts and the exosome. The chain is DNA primase DnaG from Picrophilus torridus (strain ATCC 700027 / DSM 9790 / JCM 10055 / NBRC 100828 / KAW 2/3).